Reading from the N-terminus, the 67-residue chain is DNA-directed RNA polymerase subunit omega (67 aa).

Belongs to the RNA polymerase subunit omega family. The RNAP catalytic core consists of 2 alpha, 1 beta, 1 beta' and 1 omega subunit. When a sigma factor is associated with the core the holoenzyme is formed, which can initiate transcription.

The catalysed reaction is RNA(n) + a ribonucleoside 5'-triphosphate = RNA(n+1) + diphosphate. Functionally, promotes RNA polymerase assembly. Latches the N- and C-terminal regions of the beta' subunit thereby facilitating its interaction with the beta and alpha subunits. This is DNA-directed RNA polymerase subunit omega from Delftia acidovorans (strain DSM 14801 / SPH-1).